Consider the following 357-residue polypeptide: tRNA-specific 2-thiouridylase MnmA (357 aa).

ATP contacts are provided by residues 7–14 and Met33; that span reads AMSGGVDS. Residue Cys101 is the Nucleophile of the active site. Cysteines 101 and 198 form a disulfide. ATP is bound at residue Gly125. Residues 148–150 form an interaction with tRNA region; that stretch reads KDQ. The active-site Cysteine persulfide intermediate is the Cys198.

Belongs to the MnmA/TRMU family.

The protein resides in the cytoplasm. It carries out the reaction S-sulfanyl-L-cysteinyl-[protein] + uridine(34) in tRNA + AH2 + ATP = 2-thiouridine(34) in tRNA + L-cysteinyl-[protein] + A + AMP + diphosphate + H(+). Functionally, catalyzes the 2-thiolation of uridine at the wobble position (U34) of tRNA, leading to the formation of s(2)U34. The chain is tRNA-specific 2-thiouridylase MnmA from Herpetosiphon aurantiacus (strain ATCC 23779 / DSM 785 / 114-95).